The sequence spans 395 residues: tRNA (guanine-N(7)-)-methyltransferase (395 aa).

Positions 126, 151, and 178 each coordinate S-adenosyl-L-methionine. Residues lysine 204 and aspartate 234 each contribute to the substrate site.

It belongs to the class I-like SAM-binding methyltransferase superfamily. TrmB family.

The enzyme catalyses guanosine(46) in tRNA + S-adenosyl-L-methionine = N(7)-methylguanosine(46) in tRNA + S-adenosyl-L-homocysteine. The protein operates within tRNA modification; N(7)-methylguanine-tRNA biosynthesis. Catalyzes the formation of N(7)-methylguanine at position 46 (m7G46) in tRNA. The sequence is that of tRNA (guanine-N(7)-)-methyltransferase from Campylobacter fetus subsp. fetus (strain 82-40).